Consider the following 534-residue polypeptide: MRREHARAILFPLVRLPWLLIVLALIAYGAVLAGGIVPALTGAAVSGIAMFTLGAALAIYTGMRVGAAPVRLGGRAASARRAYLTLAFAATGVLYLAVIFGAINTSAGTLWTCQTWPGCAMTGDSAWLALAHRGLAGGATLLIAALAVQTWRIRHERSLRIAVAWALGLMLIQNLVGLAQVLLAQGGESQPVAVARLMHLGLSATAWGALVVLTTLALRRPFPAVALLRPAHVARPGMTDTVLLEGKPSLLKDYISLTKPGVISLLILTTITSMYITPAGIPELSLVLWTTLGGWLMASGSHSINCYLDKDIDVNMGRTGRRPIPSGRIPAWHALALGIALGVVAFVILALFVNLLAAILALAGFLYYVFIYTIWLKRTSKHNIVIGGGAGAFPPLVGWAAVTGSLAPEALLLWLIVFFWTPPHFWALALIRQKDYARAGVPMLPVVEGDQETRRQIVIYTLSMLALTALPPVLGMLGWAYLMSAAVSGGLFLHYALKLRRDGTTTTAWALYKYSLLYLAILFVAMAVDRVVFA.

Residues 1-251 form a unknown region; sequence MRREHARAIL…VLLEGKPSLL (251 aa). Helical transmembrane passes span 17-37, 39-59, 83-103, 128-148, 163-183, 197-217, 261-281, 284-304, 339-359, 360-380, 384-404, 411-431, 457-477, 479-499, and 508-528; these read PWLL…GGIV, ALTG…ALAI, YLTL…FGAI, LALA…ALAV, VAWA…QVLL, LMHL…TTLA, GVIS…PAGI, LSLV…SHSI, IALG…LAAI, LALA…KRTS, IVIG…AVTG, LLLW…LALI, IVIY…LGML, WAYL…ALKL, and AWAL…AMAV. The tract at residues 252-530 is protoheme IX prenyltransferase; it reads KDYISLTKPG…ILFVAMAVDR (279 aa).

In the C-terminal section; belongs to the UbiA prenyltransferase family. Protoheme IX farnesyltransferase subfamily.

Its subcellular location is the cell membrane. It carries out the reaction heme b + (2E,6E)-farnesyl diphosphate + H2O = Fe(II)-heme o + diphosphate. It participates in porphyrin-containing compound metabolism; heme O biosynthesis; heme O from protoheme: step 1/1. Converts heme B (protoheme IX) to heme O by substitution of the vinyl group on carbon 2 of heme B porphyrin ring with a hydroxyethyl farnesyl side group. The polypeptide is Protoheme IX farnesyltransferase (ctaB) (Roseiflexus sp. (strain RS-1)).